Here is a 396-residue protein sequence, read N- to C-terminus: Ribosomal RNA large subunit methyltransferase I (396 aa).

Residues 2–81 (SVRLVLAKGR…ESIDIAFFSR (80 aa)) form the PUA domain.

This sequence belongs to the methyltransferase superfamily. RlmI family.

It is found in the cytoplasm. The catalysed reaction is cytidine(1962) in 23S rRNA + S-adenosyl-L-methionine = 5-methylcytidine(1962) in 23S rRNA + S-adenosyl-L-homocysteine + H(+). In terms of biological role, specifically methylates the cytosine at position 1962 (m5C1962) of 23S rRNA. The sequence is that of Ribosomal RNA large subunit methyltransferase I from Shigella boydii serotype 4 (strain Sb227).